Reading from the N-terminus, the 242-residue chain is Probable transcriptional regulatory protein lhv_0777 (242 aa).

The segment at 1–22 is disordered; it reads MSGHSKWHNIQGRKNAQDAKRG.

The protein belongs to the TACO1 family.

The protein resides in the cytoplasm. The protein is Probable transcriptional regulatory protein lhv_0777 of Lactobacillus helveticus (strain DPC 4571).